We begin with the raw amino-acid sequence, 159 residues long: Aspartate carbamoyltransferase regulatory chain (159 aa).

Residues Cys-108, Cys-113, Cys-138, and Cys-141 each coordinate Zn(2+).

The protein belongs to the PyrI family. In terms of assembly, contains catalytic and regulatory chains. The cofactor is Zn(2+).

Its function is as follows. Involved in allosteric regulation of aspartate carbamoyltransferase. The polypeptide is Aspartate carbamoyltransferase regulatory chain (Thermofilum pendens (strain DSM 2475 / Hrk 5)).